We begin with the raw amino-acid sequence, 437 residues long: Citrate synthase (437 aa).

Catalysis depends on residues His-316 and Asp-372.

Belongs to the citrate synthase family. Homohexamer.

The catalysed reaction is oxaloacetate + acetyl-CoA + H2O = citrate + CoA + H(+). It functions in the pathway carbohydrate metabolism; tricarboxylic acid cycle; isocitrate from oxaloacetate: step 1/2. Its activity is regulated as follows. Weakly inhibited by ATP (apparent Ki = 10 mm). In Corynebacterium glutamicum (strain ATCC 13032 / DSM 20300 / JCM 1318 / BCRC 11384 / CCUG 27702 / LMG 3730 / NBRC 12168 / NCIMB 10025 / NRRL B-2784 / 534), this protein is Citrate synthase (gltA).